Reading from the N-terminus, the 201-residue chain is Large ribosomal subunit protein uL4 (201 aa).

Residues 46-71 (QKTRAEVVGSGKKPWRQKGTGRARAG) form a disordered region.

Belongs to the universal ribosomal protein uL4 family. Part of the 50S ribosomal subunit.

Functionally, one of the primary rRNA binding proteins, this protein initially binds near the 5'-end of the 23S rRNA. It is important during the early stages of 50S assembly. It makes multiple contacts with different domains of the 23S rRNA in the assembled 50S subunit and ribosome. Forms part of the polypeptide exit tunnel. This is Large ribosomal subunit protein uL4 from Shewanella woodyi (strain ATCC 51908 / MS32).